Here is a 279-residue protein sequence, read N- to C-terminus: Homeobox protein BarH-like 2 (279 aa).

2 disordered regions span residues 110–137 and 194–279; these read APGGEALASSESETEQPTPRQKKPRRSR and KGGQ…PPLS. The segment covering 118–128 has biased composition (polar residues); that stretch reads SSESETEQPTP. A DNA-binding region (homeobox) is located at residues 133 to 192; the sequence is PRRSRTIFTELQLMGLEKKFQKQKYLSTPDRLDLAQSLGLTQLQVKTWYQNRRMKWKKMV. Polar residues predominate over residues 225 to 240; sequence NSQAQGQEQLEPSQGQ. The segment covering 261 to 279 has biased composition (pro residues); it reads PPDPPQELPIPSSEPPPLS.

The protein belongs to the BAR homeobox family. Highly expressed in adult salivary gland and at much lower levels in mammary gland, kidney and placenta.

It is found in the nucleus. Functionally, transcription factor. Binds optimally to the DNA consensus sequence 5'-YYTAATGRTTTTY-3'. May control the expression of neural adhesion molecules such as L1 or Ng-CAM during embryonic development of both the central and peripherical nervous system. May be involved in controlling adhesive processes in keratinizing epithelia. This chain is Homeobox protein BarH-like 2 (BARX2), found in Homo sapiens (Human).